We begin with the raw amino-acid sequence, 61 residues long: Photosystem II reaction center X protein (61 aa).

The helical transmembrane segment at 26–46 (IGSFIAAALLIVIPATAFLIF) threads the bilayer.

It belongs to the PsbX family. Type 2 subfamily. In terms of assembly, PSII consists of a core antenna complex that captures photons, and an electron transfer chain that converts photonic excitation into a charge separation. PSII forms dimeric complexes.

The protein resides in the cellular thylakoid membrane. In terms of biological role, involved in the binding and/or turnover of quinones at the Q(B) site of Photosystem II. This is Photosystem II reaction center X protein from Prochlorococcus marinus (strain MIT 9301).